The sequence spans 135 residues: Small ribosomal subunit protein bS16m (135 aa).

The N-terminal 34 residues, 1-34 (MVQLTTIFCKAYHGGHLTIRLALGGCTNRPFYRI), are a transit peptide targeting the mitochondrion.

It belongs to the bacterial ribosomal protein bS16 family. As to quaternary structure, component of the mitochondrial ribosome small subunit (28S) which comprises a 12S rRNA and about 30 distinct proteins.

It is found in the mitochondrion. The polypeptide is Small ribosomal subunit protein bS16m (Mrps16) (Mus musculus (Mouse)).